Consider the following 232-residue polypeptide: Large ribosomal subunit protein uL1 (232 aa).

Belongs to the universal ribosomal protein uL1 family. As to quaternary structure, part of the 50S ribosomal subunit.

Functionally, binds directly to 23S rRNA. The L1 stalk is quite mobile in the ribosome, and is involved in E site tRNA release. In terms of biological role, protein L1 is also a translational repressor protein, it controls the translation of the L11 operon by binding to its mRNA. This is Large ribosomal subunit protein uL1 from Burkholderia multivorans (strain ATCC 17616 / 249).